A 275-amino-acid chain; its full sequence is Large ribosomal subunit protein uL2c (275 aa).

Positions 225-249 (PVDHPHGGGEGRAPIGRKKPTTPWG) are disordered.

The protein belongs to the universal ribosomal protein uL2 family. In terms of assembly, part of the 50S ribosomal subunit.

The protein resides in the plastid. The sequence is that of Large ribosomal subunit protein uL2c (rpl2) from Cuscuta reflexa (Southern Asian dodder).